The following is a 57-amino-acid chain: uncharacterized protein (57 aa).

A helical membrane pass occupies residues 24–44 (LWVTLLLTMFFTAVEIIGGLI).

This sequence to cation A.eutrophus efflux system protein CzcD.

The protein localises to the cell membrane. This is an uncharacterized protein from Bacillus caldolyticus.